Consider the following 162-residue polypeptide: Anaerobic nitrite reductase GLB1 (162 aa).

The region spanning 9–159 (VFSEEKEALV…LVAAIKQEMK (151 aa)) is the Globin domain. The short motif at 42-46 (EIAPS) is the Homodimerization element. Residues Lys-66, His-70, Arg-100, Thr-104, and His-105 each coordinate heme b. A Homodimerization motif is present at residues 112-124 (DGHFEVTRFALLE).

Belongs to the plant globin family. As to quaternary structure, homodimer. Heme b is required as a cofactor. Seeds and roots.

It is found in the cytoplasm. The protein localises to the nucleus. The enzyme catalyses Fe(III)-heme b-[protein] + nitric oxide + H2O = Fe(II)-heme b-[protein] + nitrite + 2 H(+). Its function is as follows. Phytoglobin that reduces nitrite to nitric oxide (NO) under anoxic conditions (e.g. during flooding or in waterlogged soil). May not function as an oxygen storage or transport protein. Has an unusually high affinity for O(2) through an hexacoordinate heme iron because of a very low dissociation constant. The sequence is that of Anaerobic nitrite reductase GLB1 from Hordeum vulgare (Barley).